Here is a 316-residue protein sequence, read N- to C-terminus: MTSENSIHNALYLGFNRSQWAELRESVPLTLNEPELADLRGINEKLSLTEVTDIYLPLSRLLNLIVGAKQKRGLVLNEFLGRKPPKRPYIISIAGSVAVGKSTTARILQALLSQWPEHPRVDLVTTDGFLYPLAELKRRGLLQRKGFPESYDMKMLVEFISNVKAGNEHVKSPLYSHISYDRIKSDYQAIEQPDILIIEGLNVLQSGQDSAVGIQQPFVSDFVDFSIYVDAEEQLLKKWYIDRFLQFRGGAFSDEKSYFHHYSNLADNEAKTIAANIWDSINGPNLKLNIEPTRDRAHLILQKGYDHLMSQVLLRK.

95–102 is an ATP binding site; that stretch reads GSVAVGKS.

Belongs to the prokaryotic pantothenate kinase family.

The protein resides in the cytoplasm. It carries out the reaction (R)-pantothenate + ATP = (R)-4'-phosphopantothenate + ADP + H(+). It participates in cofactor biosynthesis; coenzyme A biosynthesis; CoA from (R)-pantothenate: step 1/5. The chain is Pantothenate kinase from Shewanella sediminis (strain HAW-EB3).